The primary structure comprises 529 residues: Peptide chain release factor 3 (529 aa).

The region spanning 11-280 (ATRRTFAIIS…GLVQWAPPPQ (270 aa)) is the tr-type G domain. Residues 20–27 (SHPDAGKT), 88–92 (DTPGH), and 142–145 (NKLD) each bind GTP.

The protein belongs to the TRAFAC class translation factor GTPase superfamily. Classic translation factor GTPase family. PrfC subfamily.

The protein resides in the cytoplasm. Functionally, increases the formation of ribosomal termination complexes and stimulates activities of RF-1 and RF-2. It binds guanine nucleotides and has strong preference for UGA stop codons. It may interact directly with the ribosome. The stimulation of RF-1 and RF-2 is significantly reduced by GTP and GDP, but not by GMP. The polypeptide is Peptide chain release factor 3 (Alcanivorax borkumensis (strain ATCC 700651 / DSM 11573 / NCIMB 13689 / SK2)).